The chain runs to 774 residues: Protein translocase subunit SecA (774 aa).

ATP-binding positions include Gln66, 84-88 (GEGKS), and Asp474.

It belongs to the SecA family.

The protein localises to the plastid. It localises to the chloroplast stroma. It is found in the chloroplast thylakoid membrane. The enzyme catalyses ATP + H2O + cellular proteinSide 1 = ADP + phosphate + cellular proteinSide 2.. Has a central role in coupling the hydrolysis of ATP to the transfer of proteins across the thylakoid membrane. This Cyanidioschyzon merolae (strain NIES-3377 / 10D) (Unicellular red alga) protein is Protein translocase subunit SecA.